The chain runs to 138 residues: Putative nickel-responsive regulator (138 aa).

Ni(2+) is bound by residues His-76, His-87, His-89, and Cys-95.

Belongs to the transcriptional regulatory CopG/NikR family. The cofactor is Ni(2+).

Transcriptional regulator. This is Putative nickel-responsive regulator from Pseudomonas putida (strain ATCC 47054 / DSM 6125 / CFBP 8728 / NCIMB 11950 / KT2440).